Here is a 525-residue protein sequence, read N- to C-terminus: uncharacterized protein (525 aa).

The first 21 residues, 1 to 21, serve as a signal peptide directing secretion; it reads MLECLSALLVLFAGGGGSVLA. The Extracellular segment spans residues 22–448; it reads AVQSKTVADP…ISAASQLDKR (427 aa). The disordered stretch occupies residues 242–264; sequence KVSSENCSKDTDDKSGSKKERNT. The chain crosses the membrane as a helical span at residues 449-469; the sequence is IFIFTAITVSITTLMMLGFSY. Residues 470–525 are Cytoplasmic-facing; sequence RSRVSFRDHSIDDSDDDNDWSDDEVEFDEEYFYSLPVSIPEKGISLDKMAQQLGVE.

It localises to the membrane. This is an uncharacterized protein from Saccharomyces cerevisiae (strain YJM789) (Baker's yeast).